Here is a 318-residue protein sequence, read N- to C-terminus: Carnitine monooxygenase reductase subunit (318 aa).

An FAD-binding FR-type domain is found at 5–107 (YEMFPAVVTR…SEPKNLFPLA (103 aa)). A 2Fe-2S ferredoxin-type domain is found at 233–318 (FTVVLAKSNQ…AKGKKLVLDL (86 aa)). [2Fe-2S] cluster contacts are provided by Cys267, Cys272, Cys275, and Cys305.

Belongs to the PDR/VanB family. CntB subfamily. As to quaternary structure, composed of an oxygenase subunit (cntA) and a reductase subunit (cntB). Requires FMN as cofactor. It depends on [2Fe-2S] cluster as a cofactor.

The enzyme catalyses (R)-carnitine + NADH + O2 + H(+) = (3R)-3-hydroxy-4-oxobutanoate + trimethylamine + NAD(+) + H2O. It carries out the reaction (R)-carnitine + NADPH + O2 + H(+) = (3R)-3-hydroxy-4-oxobutanoate + trimethylamine + NADP(+) + H2O. It functions in the pathway amine and polyamine metabolism; carnitine metabolism. Functionally, converts carnitine to trimethylamine and malic semialdehyde. The protein is Carnitine monooxygenase reductase subunit of Acinetobacter baumannii (strain ATCC 19606 / DSM 30007 / JCM 6841 / CCUG 19606 / CIP 70.34 / NBRC 109757 / NCIMB 12457 / NCTC 12156 / 81).